Here is a 523-residue protein sequence, read N- to C-terminus: Major facilitator-type transporter psiT2 (523 aa).

A compositionally biased stretch (polar residues) spans 1–26 (MSLERSTSPNPTERTSLLSDTASTIS). A disordered region spans residues 1–45 (MSLERSTSPNPTERTSLLSDTASTISSRDDVEQSSLKQRRTPIPT). The next 5 membrane-spanning stretches (helical) occupy residues 88–108 (FYSG…IFML), 125–145 (ALGI…TMML), 149–169 (VCAG…SELT), 175–195 (ALVV…GPLI), and 221–241 (FLPS…GYFF). An N-linked (GlcNAc...) asparagine glycan is attached at Asn269. 3 helical membrane-spanning segments follow: residues 317-337 (FLMF…FTAV), 352-372 (AFSV…PWVL), and 382-402 (HFCM…NPLA). A glycan (N-linked (GlcNAc...) asparagine) is linked at Asn410. Helical transmembrane passes span 419–439 (GLLY…VMAF), 455–474 (LATA…AFCP), and 488–508 (NILG…VGVW).

The protein belongs to the major facilitator superfamily. TCR/Tet family.

It localises to the membrane. Its function is as follows. Major facilitator-type transporter; part of the gene cluster that mediates the biosynthesis of psilocybin, a psychotropic tryptamine-derived natural product. This Psilocybe cubensis (Psychedelic mushroom) protein is Major facilitator-type transporter psiT2.